Here is a 129-residue protein sequence, read N- to C-terminus: Follitropin subunit beta (129 aa).

Positions 1–18 (MKSVQFCFLFCCWRVICC) are cleaved as a signal peptide. Intrachain disulfides connect Cys-21–Cys-69, Cys-35–Cys-84, Cys-38–Cys-122, Cys-46–Cys-100, Cys-50–Cys-102, and Cys-105–Cys-112. 2 N-linked (GlcNAc...) asparagine glycosylation sites follow: Asn-25 and Asn-42.

It belongs to the glycoprotein hormones subunit beta family. Heterodimer. The active follitropin is a heterodimer composed of an alpha chain/CGA shared with other hormones and a unique beta chain/FSHB shown here.

Its subcellular location is the secreted. Its function is as follows. Together with the alpha chain CGA constitutes follitropin, the follicle-stimulating hormone, and provides its biological specificity to the hormone heterodimer. Binds FSHR, a G protein-coupled receptor, on target cells to activate downstream signaling pathways. Follitropin is involved in follicle development and spermatogenesis in reproductive organs. This is Follitropin subunit beta (FSHB) from Panthera tigris altaica (Siberian tiger).